The following is a 238-amino-acid chain: MIYAGILAGGIGSRMGNVPLPKQFLDIDNKPILIHTIEKFILVSEFNEIIIATPAQWISHTQDILKKYNITDQRVKVVAGGTDRNETIMNIIDHIRNTQGINDDDVIVTHDAVRPFLTQRIIKENIEVAAKYGAVDTVIEAIDTIVMSKDKQNIHSIPVRNEMYQGQTPQSFNIKLLQDSYRALSSAQKEILSDACKIIVESGHAVKLVRGELYNIKVTTPYDLKVANAIIQGDIADD.

Residues 7-10 (LAGG) and 81-87 (GTDRNET) contribute to the CTP site.

It belongs to the IspD/TarI cytidylyltransferase family. TarI subfamily.

It carries out the reaction D-ribitol 5-phosphate + CTP + H(+) = CDP-L-ribitol + diphosphate. The protein operates within cell wall biogenesis; poly(ribitol phosphate) teichoic acid biosynthesis. Catalyzes the transfer of the cytidylyl group of CTP to D-ribitol 5-phosphate. The polypeptide is Ribitol-5-phosphate cytidylyltransferase 2 (Staphylococcus aureus (strain MRSA252)).